The chain runs to 277 residues: Basic leucine zipper transcriptional factor ATF-like 2 (277 aa).

Disordered regions lie at residues 15 to 50 (LGES…HQQH), 126 to 146 (FQTP…CSHE), and 191 to 256 (SFSK…QKSS). The bZIP domain maps to 18–81 (SQKQLKKKQK…AGWGRTLHLH (64 aa)). Positions 20–42 (KQLKKKQKNRVAAQRSRQKHTSK) are basic motif. A compositionally biased stretch (basic and acidic residues) spans 41–50 (SKADALHQQH). The interval 46–67 (LHQQHESLEKQNHALRKEIQAL) is leucine-zipper. 2 stretches are compositionally biased toward polar residues: residues 213 to 227 (RQEQ…SSDS) and 247 to 256 (GSSTHWQKSS).

It belongs to the bZIP family. Heterodimer; heterodimerizes with JUN family proteins.

The protein resides in the nucleus. Its function is as follows. AP-1 family transcription factor that controls the differentiation of lineage-specific cells in the immune system. Selectively suppresses CCN1 transcription and hence blocks the downstream cell proliferation signals produced by CCN1 and inhibits CCN1-induced anchorage-independent growth and invasion in several cancer types. Possibly acts by interfering with AP-1 binding to CCN1 promoter. Following infection, participates in the differentiation of CD8(+) thymic conventional dendritic cells in the immune system. Acts via the formation of a heterodimer with JUN family proteins that recognizes and binds DNA sequence 5'-TGA[CG]TCA-3' and regulates expression of target genes. The chain is Basic leucine zipper transcriptional factor ATF-like 2 (Batf2) from Mus musculus (Mouse).